A 647-amino-acid polypeptide reads, in one-letter code: MGKIRKLDDQLSNLIAAGEVVERPASVVKELVENSIDANSTSIEIHLEEAGLSKIRIIDNGDGIAEEDCIVAFERHATSKIKDENDLFRIRTLGFRGEALPSIASVSELELITSTGDAPGTHLIIKGGDIIKQEKTASRKGTDITVQNLFFNTPARLKYMKTIHTELGNITDIVYRIAMSHPEVSLKLFHNEKKLLHTSGNGDVRQVLASIYSIQVAKKLVPIEAESLDFTIKGYVTLPEVTRASRNYMSTIVNGRYVRNFVLMKAIQQGYHTLLPVGRYPIGFLSIEMDPMLVDVNVHPAKLEVRFSKEQELLKLIEETLQAAFKKIQLIPDAGVTTKKKEKDESVQEQFQFEHAKPKEPSMPEIVLPTGMDEKQEEPQAVKQSAQLWQPPKQEWQPPQSLVREEQSWQPSTKSIIEEPIREEKSWNSNDEDFELEELEEEVQEIEEIEMNGNDLPPLYPIGQMHGTYIFAQNDKGLYMIDQHAAQERINYEYFRDKVGRVAQEVQELLVPYRIDLSLTEFLRVEEQLEELKKVGLFLEQFGHQSFIVRSHPTWFPKGQETEIIDEMMEQVVKLKKVDIKKLREEAAIMMSCKASIKANQYLTNDQIFALLEELRTTTNPYTCPHGRPILVHHSTYELEKMFKRVM.

Residues 377–396 (EEPQAVKQSAQLWQPPKQEW) are disordered. Residues 387–396 (QLWQPPKQEW) are compositionally biased toward low complexity.

It belongs to the DNA mismatch repair MutL/HexB family.

Its function is as follows. This protein is involved in the repair of mismatches in DNA. It is required for dam-dependent methyl-directed DNA mismatch repair. May act as a 'molecular matchmaker', a protein that promotes the formation of a stable complex between two or more DNA-binding proteins in an ATP-dependent manner without itself being part of a final effector complex. In Bacillus cereus (strain AH187), this protein is DNA mismatch repair protein MutL.